Reading from the N-terminus, the 343-residue chain is Flavone 3'-O-methyltransferase OMT1 (343 aa).

Asn-107 contacts (E)-ferulate. 6 residues coordinate S-adenosyl-L-homocysteine: Gly-184, Asp-207, Asp-227, Met-228, Met-240, and Lys-241. Residue His-245 is the Proton acceptor of the active site. Asp-246 provides a ligand contact to (E)-5-hydroxyferulate. Residues Glu-273 and Glu-305 contribute to the active site.

This sequence belongs to the class I-like SAM-binding methyltransferase superfamily. Cation-independent O-methyltransferase family. COMT subfamily. As to quaternary structure, homodimer.

The enzyme catalyses (E)-5-hydroxyferulate + S-adenosyl-L-methionine = (E)-sinapate + S-adenosyl-L-homocysteine + H(+). It carries out the reaction luteolin + S-adenosyl-L-methionine = chrysoeriol + S-adenosyl-L-homocysteine + H(+). The catalysed reaction is quercetin + S-adenosyl-L-methionine = isorhamnetin + S-adenosyl-L-homocysteine + H(+). It catalyses the reaction (E)-caffeate + S-adenosyl-L-methionine = (E)-ferulate + S-adenosyl-L-homocysteine + H(+). The enzyme catalyses a 3'-hydroxyflavone + S-adenosyl-L-methionine = a 3'-methoxyflavone + S-adenosyl-L-homocysteine + H(+). Its pathway is flavonoid metabolism. Functionally, catalyzes the 3'-O-methylation of the flavonoids luteolin and quercetin. Catalyzes the 3- of 5-O-methylation of the phenylpropanoids caffeate and 5-hydroxyferulate. Substrate preference is 5-hydroxyferulate &gt; luteolin &gt; quercetin &gt; caffeate. Apigenin, kempferol and 3,4-dimethylquercetin do not seem to be substrates for methylation. The polypeptide is Flavone 3'-O-methyltransferase OMT1 (Chrysosplenium americanum (American golden saxifrage)).